Consider the following 880-residue polypeptide: Probable dipeptidyl-aminopeptidase B (880 aa).

Residues 1–26 (MPRQRAPKEEEAELLTKQERSARSSE) show a composition bias toward basic and acidic residues. Positions 1–71 (MPRQRAPKEE…KYTDEDDEAQ (71 aa)) are disordered. Over 1 to 93 (MPRQRAPKEE…PISVDKKTRR (93 aa)) the chain is Cytoplasmic. Residues 30 to 40 (DTSISSISTTS) show a composition bias toward low complexity. The helical; Signal-anchor for type II membrane protein transmembrane segment at 94 to 114 (WLWIVGIACVTGWALALVFFL) threads the bilayer. Residues 115 to 880 (MSGSYKHVST…AQVDARMERR (766 aa)) lie on the Vacuolar side of the membrane. N-linked (GlcNAc...) asparagine glycosylation occurs at N533. The active-site Charge relay system is the S724. N-linked (GlcNAc...) asparagine glycosylation occurs at N778. Catalysis depends on charge relay system residues D801 and H834.

The protein belongs to the peptidase S9B family.

The protein localises to the vacuole membrane. It carries out the reaction Release of an N-terminal dipeptide, Xaa-Yaa-|-Zaa-, from a polypeptide, preferentially when Yaa is Pro, provided Zaa is neither Pro nor hydroxyproline.. Type IV dipeptidyl-peptidase which removes N-terminal dipeptides sequentially from polypeptides having unsubstituted N-termini provided that the penultimate residue is proline. In Pyrenophora tritici-repentis (strain Pt-1C-BFP) (Wheat tan spot fungus), this protein is Probable dipeptidyl-aminopeptidase B (dapB).